A 261-amino-acid polypeptide reads, in one-letter code: Imidazole glycerol phosphate synthase subunit HisF (261 aa).

Active-site residues include D11 and D130.

The protein belongs to the HisA/HisF family. Heterodimer of HisH and HisF.

The protein localises to the cytoplasm. The catalysed reaction is 5-[(5-phospho-1-deoxy-D-ribulos-1-ylimino)methylamino]-1-(5-phospho-beta-D-ribosyl)imidazole-4-carboxamide + L-glutamine = D-erythro-1-(imidazol-4-yl)glycerol 3-phosphate + 5-amino-1-(5-phospho-beta-D-ribosyl)imidazole-4-carboxamide + L-glutamate + H(+). The protein operates within amino-acid biosynthesis; L-histidine biosynthesis; L-histidine from 5-phospho-alpha-D-ribose 1-diphosphate: step 5/9. Functionally, IGPS catalyzes the conversion of PRFAR and glutamine to IGP, AICAR and glutamate. The HisF subunit catalyzes the cyclization activity that produces IGP and AICAR from PRFAR using the ammonia provided by the HisH subunit. The sequence is that of Imidazole glycerol phosphate synthase subunit HisF from Jannaschia sp. (strain CCS1).